Here is a 142-residue protein sequence, read N- to C-terminus: Cystatin-8 (142 aa).

Positions 1–21 are cleaved as a signal peptide; it reads MPRCRWLSLILLTIPLALVAR. Residues asparagine 27 and asparagine 39 are each glycosylated (N-linked (GlcNAc...) asparagine). A Secondary area of contact motif is present at residues 77–81; that stretch reads QVTNL. Cystine bridges form between cysteine 95/cysteine 105 and cysteine 119/cysteine 139.

This sequence belongs to the cystatin family. In terms of tissue distribution, proximal caput region of the epididymis. Lower expression in the testis. Within the testis it is localized to the elongating spermatids, whereas within the epididymis it is exclusively synthesized by the proximal caput epithelium.

The protein resides in the secreted. In terms of biological role, performs a specialized role during sperm development and maturation. The sequence is that of Cystatin-8 (CST8) from Homo sapiens (Human).